We begin with the raw amino-acid sequence, 186 residues long: C-type lectin domain family 19 member A (186 aa).

Residues 1–19 (MQRWTLWAAAFLTLHSAQA) form the signal peptide. A C-type lectin domain is found at 47–179 (FKGHCYRFFP…CSRKFPFVCK (133 aa)). Asn-58 carries an N-linked (GlcNAc...) asparagine glycan. Cystine bridges form between Cys-68/Cys-178 and Cys-151/Cys-170.

The protein localises to the secreted. The protein is C-type lectin domain family 19 member A of Homo sapiens (Human).